A 572-amino-acid chain; its full sequence is MAWGHRTTVCLVLLGVSLGLAIIVLAVVLPHHQASCRPDAFTRAAVAADSKICSDIGRVILQQQGSPVDAAIAALICTGVVNPQSMGLGGGVVFTIYNASTGKVEVINARETVPASHDQRLLDQCTNALPLCTGAQWIGVPGELRGYAEAHRRYGRLPWAQLFQPTIALLREGFRVPPILSQFLNTSFLQPCLNSSTLRQLFFNGTETLRSQDPLPWPALANTLETVAKEGAEVLYTGKLGQTLVEDIAWQGSQLTVQDLAAFRPKVVEPLEMALGNYTLYSPPPPAGGAILSFILNVLKGFNFSAETVAGPEGKVNMYHHLVEALKFAVGQRWRLWDPYSHPGIQNISQDLLRETLAQHIRQQIDGRGDHQLSHYNLSGVRGNSMGTSHVSVLGEDGSAVAATSTINTPFGAMVYSPRTGILLNNELLDLCWRHKPGSTVTPPPVPGEQPPSSMVPSILINEVQGSKLVIGGAGGELIISAVTQAIVNKLWLGFSLTDAIAAPILHVNSKGHVEYEPKFNQEVRKGLQDRGQSQSQSQRPVFLNSVQAVFQEGPCVYAASDLRKAGKASGY.

At 1 to 6 the chain is on the cytoplasmic side; sequence MAWGHR. Residues 7–29 traverse the membrane as a helical; Signal-anchor for type II membrane protein segment; sequence TTVCLVLLGVSLGLAIIVLAVVL. Residues 30–572 lie on the Extracellular side of the membrane; it reads PHHQASCRPD…LRKAGKASGY (543 aa). Asn98 carries N-linked (GlcNAc...) asparagine glycosylation. Arg110 contributes to the L-glutamate binding site. 7 N-linked (GlcNAc...) asparagine glycosylation sites follow: Asn185, Asn194, Asn204, Asn277, Asn303, Asn347, and Asn377. Residue Thr388 is the Nucleophile of the active site. L-glutamate contacts are provided by residues Thr406, Glu427, and 453–454; that span reads SS.

This sequence belongs to the gamma-glutamyltransferase family. As to quaternary structure, heterodimer composed of the light and heavy chains. The active site is located in the light chain. Post-translationally, cleaved by autocatalysis into a large and a small subunit. In terms of processing, glycosylated. In terms of tissue distribution, widely expressed, but at low level, except in the airway epithelial cells. Detected in brain, heart, kidney, liver, lung, spleen, testis and trachea.

The protein resides in the membrane. It carries out the reaction glutathione + H2O = L-cysteinylglycine + L-glutamate. It catalyses the reaction an S-substituted glutathione + H2O = an S-substituted L-cysteinylglycine + L-glutamate. The catalysed reaction is leukotriene C4 + H2O = leukotriene D4 + L-glutamate. The enzyme catalyses S-[(2E,6E,10E)-geranylgeranyl]-L-glutathione + H2O = S-[(2E,6E,10E)-geranylgeranyl]-L-cysteinylglycine + L-glutamate. It carries out the reaction an N-terminal (5-L-glutamyl)-[peptide] + an alpha-amino acid = 5-L-glutamyl amino acid + an N-terminal L-alpha-aminoacyl-[peptide]. The protein operates within lipid metabolism; leukotriene D4 biosynthesis. It functions in the pathway sulfur metabolism; glutathione metabolism. Its activity is regulated as follows. Inhibited by serine-borate. Its function is as follows. Cleaves the gamma-glutamyl bond of extracellular glutathione tripeptide (gamma-Glu-Cys-Gly) and certain glutathione conjugates. Hydrolyzes glutathione releasing L-Glu and Cys-Gly dipeptide which is further metabolized to maintain extracellular cysteine levels but also to provide cysteine necessary for intracellular glutathione synthesis. Among glutathione-S-conjugates metabolizes leukotriene C4 (LTC4) and S-geranylgeranyl-glutathione (GGG), but is inactive toward gamma-glutamyl leucine. Converts extracellular LTC4 to LTD4 during acute inflammatory response. Acts as a negative regulator of GGG bioactivity. GGT5 (via GGG catabolism) and ABCC1 (via extracellular transport) establish GGG gradients within lymphoid tissues to position P2RY8-positive lymphocytes at germinal centers in lymphoid follicles and restrict their chemotactic transmigration from blood vessels to bone marrow parenchyma. The transpeptidation reaction, i.e. the transfer of gamma-glutamyl moiety to an acceptor molecule to yield a new gamma-glutamyl compound requires high concentration of dipeptide acceptor and is considered nonphysiological. The sequence is that of Glutathione hydrolase 5 proenzyme (Ggt5) from Rattus norvegicus (Rat).